A 59-amino-acid chain; its full sequence is Large ribosomal subunit protein bL32 (59 aa).

This sequence belongs to the bacterial ribosomal protein bL32 family.

The sequence is that of Large ribosomal subunit protein bL32 from Synechococcus sp. (strain RCC307).